The primary structure comprises 207 residues: Putative 3-methyladenine DNA glycosylase (207 aa).

Belongs to the DNA glycosylase MPG family.

The chain is Putative 3-methyladenine DNA glycosylase from Listeria monocytogenes serovar 1/2a (strain ATCC BAA-679 / EGD-e).